The sequence spans 1158 residues: ATP-dependent helicase/deoxyribonuclease subunit B (1158 aa).

In terms of domain architecture, UvrD-like helicase ATP-binding spans 1–275; that stretch reads MTLHAYLGRA…QYFNQLYRFN (275 aa). 8–15 provides a ligand contact to ATP; it reads GRAGTGKS. One can recognise a UvrD-like helicase C-terminal domain in the interval 269 to 583; it reads NQLYRFNNQD…SIGTMDLAKV (315 aa). The [4Fe-4S] cluster site is built by Cys-784, Cys-1112, Cys-1115, and Cys-1121.

The protein belongs to the helicase family. AddB/RexB type 1 subfamily. As to quaternary structure, heterodimer of AddA and AddB. The cofactor is Mg(2+). It depends on [4Fe-4S] cluster as a cofactor.

The heterodimer acts as both an ATP-dependent DNA helicase and an ATP-dependent, dual-direction single-stranded exonuclease. Recognizes the chi site generating a DNA molecule suitable for the initiation of homologous recombination. The AddB subunit has 5' -&gt; 3' nuclease activity but not helicase activity. This Staphylococcus aureus (strain COL) protein is ATP-dependent helicase/deoxyribonuclease subunit B.